The chain runs to 164 residues: uncharacterized protein (164 aa).

An RDD domain is found at Y26–H158. 2 helical membrane-spanning segments follow: residues A35–F55 and M66–L86.

Its subcellular location is the cell membrane. This is an uncharacterized protein from Bacillus subtilis (strain 168).